Here is a 148-residue protein sequence, read N- to C-terminus: UPF0178 protein lpg0089 (148 aa).

Belongs to the UPF0178 family.

The sequence is that of UPF0178 protein lpg0089 from Legionella pneumophila subsp. pneumophila (strain Philadelphia 1 / ATCC 33152 / DSM 7513).